The chain runs to 513 residues: 2-isopropylmalate synthase (513 aa).

In terms of domain architecture, Pyruvate carboxyltransferase spans 4 to 266; it reads IEFFDTSLRD…KSPLVLAETM (263 aa). Mn(2+)-binding residues include Asp-13, His-201, His-203, and Asn-237. The regulatory domain stretch occupies residues 390–513; it reads ILNNVQIDGH…VEQISAHDGI (124 aa).

The protein belongs to the alpha-IPM synthase/homocitrate synthase family. LeuA type 1 subfamily. In terms of assembly, homodimer. The cofactor is Mn(2+).

It is found in the cytoplasm. The enzyme catalyses 3-methyl-2-oxobutanoate + acetyl-CoA + H2O = (2S)-2-isopropylmalate + CoA + H(+). The protein operates within amino-acid biosynthesis; L-leucine biosynthesis; L-leucine from 3-methyl-2-oxobutanoate: step 1/4. Functionally, catalyzes the condensation of the acetyl group of acetyl-CoA with 3-methyl-2-oxobutanoate (2-ketoisovalerate) to form 3-carboxy-3-hydroxy-4-methylpentanoate (2-isopropylmalate). This is 2-isopropylmalate synthase from Lactococcus lactis subsp. cremoris (strain SK11).